The sequence spans 396 residues: Aspartic protease 1 (396 aa).

Residues methionine 1 to alanine 15 form the signal peptide. The region spanning tyrosine 68–alanine 389 is the Peptidase A1 domain. The N-linked (GlcNAc...) asparagine glycan is linked to asparagine 71. The active site involves aspartate 86. Residues cysteine 99 and cysteine 104 are joined by a disulfide bond. Aspartate 278 is an active-site residue. The cysteines at positions 313 and 349 are disulfide-linked.

It belongs to the peptidase A1 family. As to quaternary structure, interacts with B.thuringiensis endotoxin Cry6Aa; the interaction prevents Cry6Aa proteolysis by host gut proteases.

Its subcellular location is the cytoplasm. The protein localises to the lysosome. The protein resides in the secreted. Functionally, aspartic protease, which is part of the necrosis cell death pathway. Promotes B.thuringiensis Cry6Aa stability by preventing its proteolysis by host gut proteases. Required for Cry6Aa-induced necrotic death of intestinal cells. Cry6Aa uptake into the host intestinal cells triggers an increase in intracellular Ca(2+) levels leading to lysosome rupture and to the subsequent release of asp-1 which leads to necrosis. This is Aspartic protease 1 from Caenorhabditis elegans.